Consider the following 134-residue polypeptide: RxLR effector protein Avh238 (134 aa).

The signal sequence occupies residues methionine 1–alanine 21. The short motif at arginine 44–arginine 68 is the RxLR-dEER element. The segment at alanine 49–proline 70 is disordered. Basic and acidic residues predominate over residues aspartate 61 to proline 70.

The protein belongs to the RxLR effector family. Interacts with host 1-aminocyclopropane-1-carboxylate synthases ACS1, ACS2, ACS3, ACS10 and ACS12.

The protein localises to the secreted. It localises to the host cytoplasm. Its subcellular location is the host nucleus. Its function is as follows. Effector that suppresses plant defense responses during the early stages of pathogen infection. Suppresses cell death induced by effectors and PAMPs in plant hosts. Is able to induced cell death in tomato, tobacco, eggplant, and potato, but not in A.thaliana. Interacts with and destabilizes host 1-aminocyclopropane-1-carboxylate synthases. By suppressing type2 ACS-catalyzed ethylene biosynthesis, Avh238 facilitates Phytophthora infection. The polypeptide is RxLR effector protein Avh238 (Avh238) (Phytophthora sojae (strain P6497) (Soybean stem and root rot agent)).